Here is a 452-residue protein sequence, read N- to C-terminus: Plasmepsin I (452 aa).

The Cytoplasmic segment spans residues methionine 1 to arginine 37. Residues methionine 1 to glycine 123 constitute a propeptide that is removed on maturation. Residues phenylalanine 38 to isoleucine 58 traverse the membrane as a helical; Signal-anchor for type II membrane protein segment. Residues aspartate 59–leucine 452 lie on the Lumenal side of the membrane. A Peptidase A1 domain is found at tyrosine 139–alanine 446. The active site involves aspartate 157. A disulfide bridge links cysteine 170 with cysteine 175. Aspartate 337 is a catalytic residue. A disulfide bond links cysteine 372 and cysteine 408.

The protein belongs to the peptidase A1 family. Not N-glycosylated. In terms of processing, proteolytically cleaved into the soluble active mature form in the digestive vacuole by cysteine protease falcipains; the process begins at the early ring stage. Proteolysis requires an acidic environment.

The protein resides in the membrane. The protein localises to the vacuole lumen. It localises to the vacuole membrane. The catalysed reaction is Hydrolysis of the 33-Phe-|-Leu-34 bond in the alpha-chain of hemoglobin, leading to denaturation of molecule.. Inhibited by KNI derived compounds KNI-10333 and to a lesser extent KNI-10743. Functionally, during the asexual blood stage, catalyzes the initial cleavage of native host hemoglobin (Hb) resulting in Hb denaturation; specifically cleaves between Phe-33 and Leu-34 of Hb alpha-chain. Digestion of host Hb is an essential step which provides the parasite with amino acids for protein synthesis, and regulates osmolarity. In Plasmodium falciparum (isolate 3D7), this protein is Plasmepsin I.